The sequence spans 310 residues: uncharacterized protein (310 aa).

Residues 1–6 (MISEKA) lie on the Cytoplasmic side of the membrane. Residues 5 to 69 (KAATALATIA…SKGNVILQVQ (65 aa)) enclose the PQ-loop 1 domain. A helical transmembrane segment spans residues 7-27 (ATALATIATVCWCVQLIPQII). At 28-36 (YNWKKKDCT) the chain is on the extracellular side. The chain crosses the membrane as a helical span at residues 37 to 57 (GLPPLMMFLWVVSGIPFAIYF). Residues 58 to 61 (CVSK) lie on the Cytoplasmic side of the membrane. Residues 62–82 (GNVILQVQPHLFMFFCSISFV) form a helical membrane-spanning segment. The Extracellular portion of the chain corresponds to 83–96 (QSCYYPPISMARSK). Residues 97–117 (IVMIVAAIIAADVGMEVGFIL) traverse the membrane as a helical segment. Topologically, residues 118 to 131 (WLRPLYEKGVKWPD) are cytoplasmic. The helical transmembrane segment at 132-152 (LIFGISASVLLAVGLLPPYFE) threads the bilayer. Residues 138–194 (ASVLLAVGLLPPYFELAKRKGRVIGINFAFLFIDSLGAWLSIISVILGNMDIMGIIL) form the PQ-loop 2 domain. Residues 153–164 (LAKRKGRVIGIN) are Extracellular-facing. A helical membrane pass occupies residues 165–185 (FAFLFIDSLGAWLSIISVILG). At 186-191 (NMDIMG) the chain is on the cytoplasmic side. Residues 192–212 (IILYSIVAGMELGIFASHFIW) traverse the membrane as a helical segment. Topologically, residues 213-310 (WCRFRFLAKG…DPDRYSRLSV (98 aa)) are extracellular. Ser229 is subject to Phosphoserine. N-linked (GlcNAc...) asparagine glycosylation is found at Asn251 and Asn259.

It is found in the cell membrane. This is an uncharacterized protein from Saccharomyces cerevisiae (strain ATCC 204508 / S288c) (Baker's yeast).